Reading from the N-terminus, the 402-residue chain is B3 domain-containing protein LFL1 (402 aa).

Residues methionine 1–threonine 174 form a disordered region. Residues alanine 74 to serine 87 show a composition bias toward low complexity. A compositionally biased stretch (pro residues) spans serine 88–proline 102. 2 stretches are compositionally biased toward low complexity: residues serine 103–serine 139 and proline 156–proline 169. The segment at residues leucine 181–glycine 284 is a DNA-binding region (TF-B3). Residues leucine 381–methionine 402 are disordered.

In terms of tissue distribution, expressed in anthers, pollen grains and young developing embryos.

The protein localises to the nucleus. Transcription repressor involved in flowering time regulation. Represses the flowering activator EHD1 by binding specifically to the DNA sequence 5'-CATGCATG-3 of its promoter. The protein is B3 domain-containing protein LFL1 (LFL1) of Oryza sativa subsp. japonica (Rice).